The sequence spans 659 residues: Ion-translocating oxidoreductase complex subunit C (659 aa).

2 4Fe-4S ferredoxin-type domains span residues 366–397 (TEMGLSEPEQSCIRCGLCVDACPAGLLPQQLY) and 407–436 (KARNHNLFDCIECGACAYVCPSNIPLVQYY). Cys-377, Cys-380, Cys-383, Cys-387, Cys-416, Cys-419, Cys-422, and Cys-426 together coordinate [4Fe-4S] cluster.

The protein belongs to the 4Fe4S bacterial-type ferredoxin family. RnfC subfamily. As to quaternary structure, the complex is composed of six subunits: RnfA, RnfB, RnfC, RnfD, RnfE and RnfG. [4Fe-4S] cluster serves as cofactor.

Its subcellular location is the cell inner membrane. In terms of biological role, part of a membrane-bound complex that couples electron transfer with translocation of ions across the membrane. This chain is Ion-translocating oxidoreductase complex subunit C, found in Yersinia pseudotuberculosis serotype IB (strain PB1/+).